A 342-amino-acid polypeptide reads, in one-letter code: tRNA(Ile)-lysidine synthase (342 aa).

31 to 36 (SGGQDS) contacts ATP.

It belongs to the tRNA(Ile)-lysidine synthase family.

It is found in the cytoplasm. It carries out the reaction cytidine(34) in tRNA(Ile2) + L-lysine + ATP = lysidine(34) in tRNA(Ile2) + AMP + diphosphate + H(+). Its function is as follows. Ligates lysine onto the cytidine present at position 34 of the AUA codon-specific tRNA(Ile) that contains the anticodon CAU, in an ATP-dependent manner. Cytidine is converted to lysidine, thus changing the amino acid specificity of the tRNA from methionine to isoleucine. This chain is tRNA(Ile)-lysidine synthase, found in Nostoc sp. (strain PCC 7120 / SAG 25.82 / UTEX 2576).